The sequence spans 158 residues: Cyclic pyranopterin monophosphate synthase (158 aa).

Substrate contacts are provided by residues Met74–His76 and Met112–Glu113. Asp127 is an active-site residue.

The protein belongs to the MoaC family. Homohexamer; trimer of dimers.

It catalyses the reaction (8S)-3',8-cyclo-7,8-dihydroguanosine 5'-triphosphate = cyclic pyranopterin phosphate + diphosphate. Its pathway is cofactor biosynthesis; molybdopterin biosynthesis. Catalyzes the conversion of (8S)-3',8-cyclo-7,8-dihydroguanosine 5'-triphosphate to cyclic pyranopterin monophosphate (cPMP). The chain is Cyclic pyranopterin monophosphate synthase from Thermoanaerobacter pseudethanolicus (strain ATCC 33223 / 39E) (Clostridium thermohydrosulfuricum).